The chain runs to 428 residues: MKTSLFKSLYFQVLTAIAIGILLGHFYPEIGEQMKPLGDGFVKLIKMIIAPVIFCTVVTGIAGMESMKAVGRTGAVALLYFEIVSTIALIIGLIIVNVVQPGAGMNVDPTTLDAKAVAVYADQAKDQGIVAFIMDVIPASVIGAFASGNILQVLLFAVLFGFALHRLGSKGQLIFNVIESFSQVIFGIINMIMRLAPIGAFGAMAFTIGKYGVGTLVQLGQLIICFYITCILFVVLVLGSIAKATGFSIFKFIRYIREELLIVLGTSSSESALPRMLDKMEKLGCRKSVVGLVIPTGYSFNLDGTSIYLTMAAVFIAQATNSQMDIVHQITLLIVLLLSSKGAAGVTGSGFIVLAATLSAVGHLPVAGLALILGIDRFMSEARALTNLVGNGVATIVVAKWVKELDHKKLDDVLNNRAPDGKTHELSS.

Helical transmembrane passes span 8 to 28, 44 to 64, 76 to 96, 142 to 162, 184 to 204, 222 to 242, 326 to 346, and 352 to 372; these read SLYF…HFYP, LIKM…IAGM, VALL…LIIV, IGAF…LFGF, VIFG…FGAM, LIIC…GSIA, IVHQ…AAGV, and IVLA…LALI.

Belongs to the dicarboxylate/amino acid:cation symporter (DAACS) (TC 2.A.23) family.

It localises to the cell inner membrane. Functionally, responsible for the transport of dicarboxylates such as succinate, fumarate, and malate from the periplasm across the membrane. In Escherichia coli O127:H6 (strain E2348/69 / EPEC), this protein is C4-dicarboxylate transport protein.